A 411-amino-acid chain; its full sequence is 2,3-bisphosphoglycerate-independent phosphoglycerate mutase (411 aa).

The protein belongs to the BPG-independent phosphoglycerate mutase family. A-PGAM subfamily.

The enzyme catalyses (2R)-2-phosphoglycerate = (2R)-3-phosphoglycerate. Its pathway is carbohydrate degradation; glycolysis; pyruvate from D-glyceraldehyde 3-phosphate: step 3/5. Functionally, catalyzes the interconversion of 2-phosphoglycerate and 3-phosphoglycerate. The chain is 2,3-bisphosphoglycerate-independent phosphoglycerate mutase from Thermococcus kodakarensis (strain ATCC BAA-918 / JCM 12380 / KOD1) (Pyrococcus kodakaraensis (strain KOD1)).